A 76-amino-acid chain; its full sequence is MSGRGKTGGKARAKAKTRSSRAGLQFPVGRVHRLLRKGNYAQRVGAGAPVYLILELAGNAARDNKKTRIIPRHLQL.

The segment at 1-23 is disordered; the sequence is MSGRGKTGGKARAKAKTRSSRAG. Residue Ser2 is modified to N-acetylserine; in acipensins. Ser2 is modified (N-acetylserine; in histone H2A). At Ser2 the chain carries Phosphoserine; in histone H2A. Lys6 carries the N6-(2-hydroxyisobutyryl)lysine modification. Residue Lys6 is modified to N6-acetyllysine; in histone H2A. Over residues 7–19 the composition is skewed to basic residues; the sequence is TGGKARAKAKTRS. The residue at position 10 (Lys10) is an N6-(2-hydroxyisobutyryl)lysine; alternate. Lys10 is modified (N6-lactoyllysine; alternate). Lys10 carries the N6-succinyllysine modification. Residues Lys14 and Lys16 each participate in a glycyl lysine isopeptide (Lys-Gly) (interchain with G-Cter in ubiquitin); in histone H2A cross-link. An N6-(2-hydroxyisobutyryl)lysine; alternate modification is found at Lys37. An N6-(2-hydroxyisobutyryl)lysine mark is found at Lys65 and Lys66.

The protein belongs to the histone H2A family. The nucleosome is a histone octamer containing two molecules each of H2A, H2B, H3 and H4 assembled in one H3-H4 heterotetramer and two H2A-H2B heterodimers. The octamer wraps approximately 147 bp of DNA. Phosphorylation on Ser-2 is enhanced during mitosis. Phosphorylation on Ser-2 directly represses transcription.

The protein resides in the nucleus. The protein localises to the chromosome. Its function is as follows. Core component of nucleosome. Nucleosomes wrap and compact DNA into chromatin, limiting DNA accessibility to the cellular machineries which require DNA as a template. Histones thereby play a central role in transcription regulation, DNA repair, DNA replication and chromosomal stability. DNA accessibility is regulated via a complex set of post-translational modifications of histones, also called histone code, and nucleosome remodeling. Functionally, acipensins are antimicrobial peptides. Acipensins 1 and 2 have antibacterial activity against Gram-positive bacteria L.monocytogenes EGD (MIC are 1.1 uM and 1.0 uM, respectively) and S.aureus ATCC 33591 (MIC are 0.9 uM and 0.6 uM, respectively), against Gram-negative bacterium E.coli ML-35p (MIC are 0.7 uM and 0.3 uM, respectively) and antifungal activity against C.albicans 820 (MIC are 1.0 uM and 0.9 uM, respectively). Acipensin 6 has antibacterial activity against Gram-negative bacterium E.coli ML-35p (MIC=2.5 uM). Antimicrobial activity is reduced by high ionic strength. Acipensins 1, 2 and 6 have no hemolytic (up to 40 uM) or cytotoxic (up to 20 uM) effects on human cells in vitro. The protein is Histone H2A of Acipenser gueldenstaedtii (Russian sturgeon).